The chain runs to 274 residues: Thiamine kinase (274 aa).

It belongs to the thiamine kinase family.

The catalysed reaction is thiamine + ATP = thiamine phosphate + ADP + H(+). The protein operates within cofactor biosynthesis; thiamine diphosphate biosynthesis; thiamine phosphate from thiamine: step 1/1. Functionally, catalyzes the ATP-dependent phosphorylation of thiamine to thiamine phosphate. Is involved in thiamine salvage. This Shigella dysenteriae serotype 1 (strain Sd197) protein is Thiamine kinase.